The sequence spans 193 residues: Ribosomal RNA large subunit methyltransferase E (193 aa).

Glycine 49, phenylalanine 51, aspartate 69, aspartate 86, and aspartate 106 together coordinate S-adenosyl-L-methionine. Lysine 146 acts as the Proton acceptor in catalysis.

The protein belongs to the class I-like SAM-binding methyltransferase superfamily. RNA methyltransferase RlmE family.

Its subcellular location is the cytoplasm. It catalyses the reaction uridine(2552) in 23S rRNA + S-adenosyl-L-methionine = 2'-O-methyluridine(2552) in 23S rRNA + S-adenosyl-L-homocysteine + H(+). In terms of biological role, specifically methylates the uridine in position 2552 of 23S rRNA at the 2'-O position of the ribose in the fully assembled 50S ribosomal subunit. The chain is Ribosomal RNA large subunit methyltransferase E from Brachyspira hyodysenteriae (strain ATCC 49526 / WA1).